Here is a 64-residue protein sequence, read N- to C-terminus: Relaxin (64 aa).

3 cysteine pairs are disulfide-bonded: Cys11–Cys51, Cys23–Cys64, and Cys50–Cys55.

The protein belongs to the insulin family. As to quaternary structure, heterodimer of a B chain and an A chain linked by two disulfide bonds.

It localises to the secreted. This chain is Relaxin, found in Leucoraja erinaceus (Little skate).